The chain runs to 1115 residues: Iron-regulated protein FrpA (1115 aa).

Hemolysin-type calcium-binding repeat units lie at residues 755 to 772 (FGHN…NDTL), 773 to 790 (IGGA…SDTY), 901 to 918 (NGGL…NDLL), 919 to 936 (NGDA…NDTL), 937 to 954 (DGGE…NDAL), 955 to 972 (NGGE…NDTL), and 973 to 990 (IGGA…SDTY).

The protein belongs to the RTX prokaryotic toxin (TC 1.C.11) family.

The protein resides in the cell outer membrane. Its subcellular location is the secreted. In terms of biological role, may participate in the pathogenesis of meningococcal disease. The protein is Iron-regulated protein FrpA (frpA) of Neisseria meningitidis serogroup C.